The following is a 96-amino-acid chain: Co-chaperonin GroES (96 aa).

This sequence belongs to the GroES chaperonin family. Heptamer of 7 subunits arranged in a ring. Interacts with the chaperonin GroEL.

Its subcellular location is the cytoplasm. Functionally, together with the chaperonin GroEL, plays an essential role in assisting protein folding. The GroEL-GroES system forms a nano-cage that allows encapsulation of the non-native substrate proteins and provides a physical environment optimized to promote and accelerate protein folding. GroES binds to the apical surface of the GroEL ring, thereby capping the opening of the GroEL channel. The protein is Co-chaperonin GroES of Leptospira borgpetersenii serovar Hardjo-bovis (strain JB197).